The sequence spans 91 residues: Acylphosphatase (91 aa).

The Acylphosphatase-like domain occupies 3–89 (AKHLILSGRV…PAEPGFVKRA (87 aa)). Catalysis depends on residues R18 and N36.

Belongs to the acylphosphatase family.

The enzyme catalyses an acyl phosphate + H2O = a carboxylate + phosphate + H(+). The polypeptide is Acylphosphatase (acyP) (Acidiphilium cryptum (strain JF-5)).